A 384-amino-acid polypeptide reads, in one-letter code: Beta-ureidopropionase (384 aa).

Residues 72–344 form the CN hydrolase domain; it reads VHVGLVQNRI…DGLLVAKLDL (273 aa). Glu-119 serves as the catalytic Proton acceptor. Residue Lys-196 is the Proton donor of the active site. Residue Cys-233 is the Nucleophile of the active site. A Phosphoserine modification is found at Ser-378.

The protein belongs to the carbon-nitrogen hydrolase superfamily. BUP family. As to quaternary structure, homodimer, homotetramer, homooctamer; can also form higher homooligomers.

It localises to the cytoplasm. The catalysed reaction is 3-(carbamoylamino)propanoate + H2O + 2 H(+) = beta-alanine + NH4(+) + CO2. It catalyses the reaction 3-(carbamoylamino)-2-methylpropanoate + H2O + 2 H(+) = (R)-3-amino-2-methylpropanoate + NH4(+) + CO2. The protein operates within amino-acid biosynthesis; beta-alanine biosynthesis. In terms of biological role, catalyzes a late step in pyrimidine degradation. Converts N-carbamoyl-beta-alanine (3-ureidopropanoate) into beta-alanine, ammonia and carbon dioxide. Likewise, converts N-carbamoyl-beta-aminoisobutyrate (3-ureidoisobutyrate) into beta-aminoisobutyrate, ammonia and carbon dioxide. This chain is Beta-ureidopropionase (UPB1), found in Pongo abelii (Sumatran orangutan).